The following is a 429-amino-acid chain: Inner membrane transport protein RhmT (429 aa).

At 1-16 the chain is on the cytoplasmic side; sequence MSTALLDAVVKKNRVR. Residues 17–37 traverse the membrane as a helical segment; that stretch reads LIPFMLALYVLAFLDRSNIGF. The Periplasmic segment spans residues 38–54; it reads AKQTYQIDTGLSNEAYA. A helical transmembrane segment spans residues 55–75; it reads LGAGIFFVVYAFLGVPANLLM. At 76–81 the chain is on the cytoplasmic side; sequence RKLGAR. The helical transmembrane segment at 82 to 102 threads the bilayer; the sequence is TWIGTTTLLWGFLSAAMAWAD. Residues 103 to 143 are Periplasmic-facing; it reads TEAKFLIVRTLLRAAEAGFFPGMIYLTSQWFPQRNRASIMG. A helical transmembrane segment spans residues 144–164; that stretch reads LFYMGAPLALTLGSPLSGALL. Residues 165-174 are Cytoplasmic-facing; it reads EMHGFMGHPG. The chain crosses the membrane as a helical span at residues 175–195; it reads WFWMFVIEGLLAVGAGVFTFF. Residues 196–242 lie on the Periplasmic side of the membrane; it reads WLDDTPEQARFLSKQEKTLLINQLASEEQQKVTSRLSDALRNGRVWQ. Residues 243 to 263 traverse the membrane as a helical segment; it reads LAIIYLTIQVAVYGLIFFLPT. Residues 264–274 lie on the Cytoplasmic side of the membrane; it reads QVAALLGTKVG. Residues 275 to 295 form a helical membrane-spanning segment; it reads FTASVVTAIPWVAALFGTWLI. The Periplasmic portion of the chain corresponds to 296 to 324; sequence PRYSDKTGERRNVAALTLLAAGIGIGLSG. Residues 325–345 traverse the membrane as a helical segment; the sequence is LLSPVMAIVALCVAAIGFIAV. Residues 346 to 361 are Cytoplasmic-facing; it reads QPVFWTMPTQLLSGTA. A helical transmembrane segment spans residues 362-382; sequence LAAGIGFVNLFGAVGGFIAPI. Topologically, residues 383–394 are periplasmic; it reads LRVKAETLFASD. Residues 395–415 form a helical membrane-spanning segment; the sequence is AAGLLTLAAVAVIGSLIIFTL. Residues 416–429 are Cytoplasmic-facing; that stretch reads RVNRTVAQTDVAHH.

Belongs to the major facilitator superfamily. Phthalate permease family.

The protein resides in the cell inner membrane. The polypeptide is Inner membrane transport protein RhmT (rhmT) (Escherichia coli (strain K12)).